The following is a 61-amino-acid chain: Small ribosomal subunit protein uS14 (61 aa).

Residues cysteine 24, cysteine 27, cysteine 40, and cysteine 43 each coordinate Zn(2+).

This sequence belongs to the universal ribosomal protein uS14 family. Zinc-binding uS14 subfamily. In terms of assembly, part of the 30S ribosomal subunit. Contacts proteins S3 and S10. Requires Zn(2+) as cofactor.

Its function is as follows. Binds 16S rRNA, required for the assembly of 30S particles and may also be responsible for determining the conformation of the 16S rRNA at the A site. This is Small ribosomal subunit protein uS14 from Thermus thermophilus (strain ATCC BAA-163 / DSM 7039 / HB27).